Reading from the N-terminus, the 364-residue chain is Anhydro-N-acetylmuramic acid kinase (364 aa).

12 to 19 (GTSHDAID) contacts ATP.

The protein belongs to the anhydro-N-acetylmuramic acid kinase family.

The enzyme catalyses 1,6-anhydro-N-acetyl-beta-muramate + ATP + H2O = N-acetyl-D-muramate 6-phosphate + ADP + H(+). The protein operates within amino-sugar metabolism; 1,6-anhydro-N-acetylmuramate degradation. It functions in the pathway cell wall biogenesis; peptidoglycan recycling. In terms of biological role, catalyzes the specific phosphorylation of 1,6-anhydro-N-acetylmuramic acid (anhMurNAc) with the simultaneous cleavage of the 1,6-anhydro ring, generating MurNAc-6-P. Is required for the utilization of anhMurNAc either imported from the medium or derived from its own cell wall murein, and thus plays a role in cell wall recycling. The polypeptide is Anhydro-N-acetylmuramic acid kinase (Gamma-proteobacterium EBAC31A08).